Here is a 1285-residue protein sequence, read N- to C-terminus: Transmembrane channel-like protein 1 (1285 aa).

The disordered stretch occupies residues 1 to 29 (MQEAARRASLRKEHTPTNEKFGDLSKQDS). The Cytoplasmic segment spans residues 1–164 (MQEAARRASL…KIKRIESHFG (164 aa)). Residues 165-202 (SVVSSYFTFLRWIVFVNIMITLIALVFVVLPETLADSV) form a helical membrane-spanning segment. Over 203 to 260 (ANEGRFNRTKTRKQIPANERVHADELAVVWHYDGYLRYSPLFYGYYSDDPFLGNKIKY) the chain is Extracellular. N-linked (GalNAc...) asparagine glycosylation occurs at asparagine 209. The chain crosses the membrane as a helical span at residues 261-292 (ALPLAYFMVTLTIFAYSFFAILRKMAANARMS). At 293–349 (KLSGSKAEQYIFNWKLFTGWDYTIGNSETASNTVMAVVIKLRESIADIKKDAHGKFR) the chain is on the cytoplasmic side. Residues 350–381 (LLQFSLRVFANIIICAMLGFSIYCIIFAVQKS) traverse the membrane as a helical segment. Topologically, residues 382 to 388 (QVQDDGN) are extracellular. The chain crosses the membrane as a helical span at residues 389-416 (LFTKNQVPSVVSTITHVFPMIFDLIGKM). At 417 to 420 (ENYH) the chain is on the cytoplasmic side. Residues 421 to 455 (PRTALRAHLGRVLILYTVNYITLIFALFEKMTALR) form a helical membrane-spanning segment. The Extracellular segment spans residues 456 to 667 (DRVNSTSTSS…NHDGHNNDIC (212 aa)). The disordered stretch occupies residues 458–488 (VNSTSTSSSHRTKRQQGGWNPNMQRPPPYAS). A disulfide bridge connects residues cysteine 667 and cysteine 816. Residues 668 to 705 (WETIIGQEIVKLVTMDLIFTILSILVIDLFRGLWIKYC) form a helical membrane-spanning segment. The segment at 696–720 (LFRGLWIKYCSSWWCWDIETTFPEY) is required for interaction with tmie. At 706-724 (SSWWCWDIETTFPEYGEFK) the chain is on the cytoplasmic side. Residues 725 to 745 (VAENVLHIINNQGMIWLGLFF) traverse the membrane as a helical segment. The Extracellular portion of the chain corresponds to 746 to 748 (APL). A helical transmembrane segment spans residues 749 to 771 (LPAINNIKLIILMYIRGWAVMTC). Positions 766-773 (WAVMTCNV) are required for interaction with tmie. Residues 772–785 (NVPAREIFRASRSS) are Cytoplasmic-facing. A helical membrane pass occupies residues 786–809 (NFYLGILLIWLLLCTLPVGFVIAS). The Extracellular portion of the chain corresponds to 810-852 (MSPSRSCGPFARYQHFYTVVTREIEKRVDQTVLSYIRHIASPG). Residues 853–886 (VVIPIILFLILIIYFLFSLVRGLREANTDLQAQL) traverse the membrane as a helical segment. The Cytoplasmic segment spans residues 887–1285 (VHERTEEKKK…DEDDSPRQID (399 aa)). 2 disordered regions span residues 940 to 962 (ADHALASDSSEESDINEDEDDER) and 1114 to 1285 (TIKE…RQID). The segment covering 948–961 (SSEESDINEDEDDE) has biased composition (acidic residues). 3 stretches are compositionally biased toward basic and acidic residues: residues 1121 to 1131 (DPGKSDKKQTS), 1146 to 1156 (DEARALREKMK), and 1167 to 1182 (TVEEKPKGGKSSESEF). Residues 1197–1208 (TEEENEEEETDS) show a composition bias toward acidic residues.

Belongs to the TMC family. In terms of assembly, homodimer. Interacts with calm-1 and tmie to form the MET channel. Expressed in the ASH polymodal avoidance neurons. Also expressed in other sensory neurons, including the ADF, ASE, ADL, AQR, PQR, URX and PHA cells.

The protein localises to the cell membrane. It catalyses the reaction Na(+)(in) = Na(+)(out). The enzyme catalyses Ca(2+)(in) = Ca(2+)(out). It carries out the reaction K(+)(in) = K(+)(out). Functionally, pore-forming subunit of the mechanotransducer (MET) non-selective cation channel complex. The MET complex is composed of symmetric dimeric MET channels, each channel comprising two copies of pore-forming ion-conducting transmembrane TMC subunits and auxiliary proteins including the transmembrane inner ear protein/tmie, the calcium-binding protein/calm-1 and arrestin domain protein arrd-6. Sodium ions are the most permeable, whereas calcium and potassium have lower indices. Sodium-sensor ion channel that acts specifically in salt taste chemosensation. Required for salt-evoked neuronal activity and behavioral avoidance of high concentrations of NaCl. This is Transmembrane channel-like protein 1 (tmc-1) from Caenorhabditis elegans.